The sequence spans 1092 residues: Isoleucine--tRNA ligase (1092 aa).

A 'HIGH' region motif is present at residues Pro53–His63. Positions Lys613–Arg617 match the 'KMSKS' region motif. Lys616 contacts ATP.

The protein belongs to the class-I aminoacyl-tRNA synthetase family. IleS type 2 subfamily. In terms of assembly, monomer. Zn(2+) serves as cofactor.

It localises to the cytoplasm. It catalyses the reaction tRNA(Ile) + L-isoleucine + ATP = L-isoleucyl-tRNA(Ile) + AMP + diphosphate. Functionally, catalyzes the attachment of isoleucine to tRNA(Ile). As IleRS can inadvertently accommodate and process structurally similar amino acids such as valine, to avoid such errors it has two additional distinct tRNA(Ile)-dependent editing activities. One activity is designated as 'pretransfer' editing and involves the hydrolysis of activated Val-AMP. The other activity is designated 'posttransfer' editing and involves deacylation of mischarged Val-tRNA(Ile). This Rickettsia africae (strain ESF-5) protein is Isoleucine--tRNA ligase.